The primary structure comprises 77 residues: MGAKCCKPVSCGMCKKTENTLIDYKGNPILLANEFTVLTDTESEEEGMADLEKPLLEKVVAKCDTEAEKKLPCKSKK.

The N-myristoyl glycine; by host moiety is linked to residue Gly-2.

Belongs to the herpesviridae cytoplasmic envelopment protein 3 family. As to quaternary structure, interacts with cytoplasmic envelopment protein 2; this interaction is essential for the proper localization of each protein to the assembly complex and thus for the production of infectious virus. Myristoylation and palmitoylation (probably on one or more of the nearby cysteines at the N-terminus) enable membrane-binding and Golgi apparatus-specific targeting and are essential for efficient packaging. Post-translationally, phosphorylated. Phosphorylation does not seem to be required for recycling to the host Golgi apparatus. Packaging is selective for underphosphorylated forms.

It localises to the virion tegument. The protein resides in the virion membrane. It is found in the host cell membrane. Its subcellular location is the host Golgi apparatus membrane. Its function is as follows. Plays an important role in the cytoplasmic envelopment of tegument proteins and capsids during the assembly and egress processes. Also participates in viral entry at the fusion step probably by regulating the core fusion machinery. The protein is Cytoplasmic envelopment protein 3 (U71) of Human herpesvirus 6A (strain Uganda-1102) (HHV-6 variant A).